A 1071-amino-acid polypeptide reads, in one-letter code: Carbamoyl phosphate synthase large chain (1071 aa).

Residues 1–403 (MPKRTDLKSI…SFQKALRGLE (403 aa)) are carboxyphosphate synthetic domain. ATP contacts are provided by arginine 129, arginine 169, glycine 175, glycine 176, glutamine 208, valine 210, glutamate 215, glycine 241, valine 242, histidine 243, glutamine 285, and glutamate 299. The 196-residue stretch at 133-328 (KEAMEKIGLS…IAKVAAKLAV (196 aa)) folds into the ATP-grasp 1 domain. Mg(2+) is bound by residues glutamine 285, glutamate 299, and asparagine 301. The Mn(2+) site is built by glutamine 285, glutamate 299, and asparagine 301. Positions 404 to 548 (TGLCGFNPRS…YSTYEEECEA (145 aa)) are oligomerization domain. Residues 549–930 (RPSDRKKVMI…AYYKAQLGAG (382 aa)) form a carbamoyl phosphate synthetic domain region. In terms of domain architecture, ATP-grasp 2 spans 673 to 864 (QKVLNDLGLR…LAKVGARCMA (192 aa)). The ATP site is built by arginine 709, phenylalanine 748, leucine 750, glutamate 755, glycine 780, isoleucine 781, histidine 782, serine 783, glutamine 823, and glutamate 835. Glutamine 823, glutamate 835, and asparagine 837 together coordinate Mg(2+). Glutamine 823, glutamate 835, and asparagine 837 together coordinate Mn(2+). In terms of domain architecture, MGS-like spans 931 to 1071 (ERLNPTGKIF…ELHGRLKNRS (141 aa)). An allosteric domain region spans residues 931 to 1071 (ERLNPTGKIF…ELHGRLKNRS (141 aa)).

It belongs to the CarB family. Composed of two chains; the small (or glutamine) chain promotes the hydrolysis of glutamine to ammonia, which is used by the large (or ammonia) chain to synthesize carbamoyl phosphate. Tetramer of heterodimers (alpha,beta)4. It depends on Mg(2+) as a cofactor. Mn(2+) serves as cofactor.

The catalysed reaction is hydrogencarbonate + L-glutamine + 2 ATP + H2O = carbamoyl phosphate + L-glutamate + 2 ADP + phosphate + 2 H(+). The enzyme catalyses hydrogencarbonate + NH4(+) + 2 ATP = carbamoyl phosphate + 2 ADP + phosphate + 2 H(+). It participates in amino-acid biosynthesis; L-arginine biosynthesis; carbamoyl phosphate from bicarbonate: step 1/1. Its pathway is pyrimidine metabolism; UMP biosynthesis via de novo pathway; (S)-dihydroorotate from bicarbonate: step 1/3. Large subunit of the glutamine-dependent carbamoyl phosphate synthetase (CPSase). CPSase catalyzes the formation of carbamoyl phosphate from the ammonia moiety of glutamine, carbonate, and phosphate donated by ATP, constituting the first step of 2 biosynthetic pathways, one leading to arginine and/or urea and the other to pyrimidine nucleotides. The large subunit (synthetase) binds the substrates ammonia (free or transferred from glutamine from the small subunit), hydrogencarbonate and ATP and carries out an ATP-coupled ligase reaction, activating hydrogencarbonate by forming carboxy phosphate which reacts with ammonia to form carbamoyl phosphate. In Neisseria meningitidis serogroup A / serotype 4A (strain DSM 15465 / Z2491), this protein is Carbamoyl phosphate synthase large chain.